We begin with the raw amino-acid sequence, 1074 residues long: DNA double-strand break repair Rad50 ATPase (1074 aa).

Residues Arg12, 32 to 38 (NGSGKSS), and Gln142 contribute to the ATP site. 2 coiled-coil regions span residues 355 to 402 (ELEK…REKA) and 452 to 506 (NLVE…KGLG). The region spanning 512 to 611 (LENLEDFSEL…KITRLKDAKK (100 aa)) is the Zinc-hook domain. Zn(2+)-binding residues include Cys559 and Cys562. Coiled coils occupy residues 574 to 611 (TAEECEDKKEKLASELADIKVQHAELEKKITRLKDAKK), 649 to 678 (LKLESLDKRKQELETSGRQLLSDIKTLQVQ), 749 to 823 (KEKL…EILE), and 865 to 895 (TEEKDSLLKEIGMLENSLKRLRELRKELKAL). 973-978 (LLSGGE) provides a ligand contact to ATP.

Belongs to the SMC family. RAD50 subfamily. In terms of assembly, homodimer. Forms a heterotetramer composed of two Mre11 subunits and two Rad50 subunits. Zn(2+) serves as cofactor.

In terms of biological role, part of the Rad50/Mre11 complex, which is involved in the early steps of DNA double-strand break (DSB) repair. The complex may facilitate opening of the processed DNA ends to aid in the recruitment of HerA and NurA. Rad50 controls the balance between DNA end bridging and DNA resection via ATP-dependent structural rearrangements of the Rad50/Mre11 complex. The protein is DNA double-strand break repair Rad50 ATPase of Methanosarcina acetivorans (strain ATCC 35395 / DSM 2834 / JCM 12185 / C2A).